The following is a 1173-amino-acid chain: SMC5-SMC6 complex localization factor protein 2 (1173 aa).

The interval 1–109 (MTRRCMPARP…KPKRVPPEKS (109 aa)) is disordered. 2 stretches are compositionally biased toward basic and acidic residues: residues 39-50 (KRTESPGDRKQS) and 88-106 (QFERKLSSPKESKPKRVPP). Positions 137–149 (SLASKYLAKGTNI) match the APIM motif motif. Disordered regions lie at residues 161 to 230 (MKSL…PEES), 256 to 275 (QMEQRINSENSFSEASSLSL), 280 to 373 (ERKY…QKEK), 394 to 620 (KEPS…EEET), and 635 to 663 (TPAATGKPPALSKGLRSQSSDYTGHVHPG). Residues 181-199 (ENNEKNDRDRGKTNADSKK) are compositionally biased toward basic and acidic residues. 2 stretches are compositionally biased toward low complexity: residues 212-221 (SSRSLSSRSS) and 262-275 (NSENSFSEASSLSL). The segment covering 280–293 (ERKYKPRQEQRKQN) has biased composition (basic and acidic residues). Positions 317–330 (SDSWEPTSAGSKQN) are enriched in polar residues. Composition is skewed to basic and acidic residues over residues 339-349 (NSVDSDLKSTR) and 355-373 (KARESFLEKRPDGPHQKEK). Polar residues predominate over residues 409-428 (PSNSGNSGHHSTRNSDQIQV). Ser481 carries the post-translational modification Phosphoserine. Basic and acidic residues predominate over residues 499 to 520 (SKKDKERSSSKECSGHSTESTK). The segment covering 571 to 592 (APSDKAPSEGESSGNSNAGSSA) has biased composition (low complexity). Residues 602 to 619 (DSDEESLGYNLDSDEEEE) are compositionally biased toward acidic residues. Phosphoserine is present on residues Ser603, Ser607, and Ser614. Positions 635–1173 (TPAATGKPPA…QLHDFWVPDS (539 aa)) are interaction with SIMC1. The segment at 664–1166 (TYTNTLERLV…NCRPTQGQLH (503 aa)) is NSE6-like domain. A required for interaction with SLF1 and RAD18 region spans residues 702-1173 (PIRIGEEDST…QLHDFWVPDS (472 aa)).

Belongs to the FAM178 family. In terms of assembly, forms a heterodimer with SIMC1. Interacts with SLF1 (via N-terminus); this interaction links RAD18 to the SMC5-SMC6 complex. Interacts with RAD18; this interaction is increased in a SLF1-dependent manner. Interacts with SMC5 and SMC6. Widely expressed. Expressed at higher level in skeletal muscle and at slightly lower level in brain, liver and heart, than in lung, kidney, spleen and thymus.

The protein localises to the nucleus. It localises to the PML body. In terms of biological role, plays a role in the DNA damage response (DDR) pathway by regulating postreplication repair of UV-damaged DNA and genomic stability maintenance. The SLF1-SLF2 complex acts to link RAD18 with the SMC5-SMC6 complex at replication-coupled interstrand cross-links (ICL) and DNA double-strand breaks (DSBs) sites on chromatin during DNA repair in response to stalled replication forks. Promotes the recruitment of the SMC5-SMC6 complex to DNA lesions. Plays a role in SMC5-SMC6 complex recruitment for viral restriction. Forms a complex with SIMC1 and this complex is required to recruit SMC5-SMC6 complex to PML nuclear bodies and sites of viral replication. This Homo sapiens (Human) protein is SMC5-SMC6 complex localization factor protein 2.